Consider the following 235-residue polypeptide: Urease accessory protein UreF (235 aa).

Belongs to the UreF family. As to quaternary structure, ureD, UreF and UreG form a complex that acts as a GTP-hydrolysis-dependent molecular chaperone, activating the urease apoprotein by helping to assemble the nickel containing metallocenter of UreC. The UreE protein probably delivers the nickel.

The protein localises to the cytoplasm. Its function is as follows. Required for maturation of urease via the functional incorporation of the urease nickel metallocenter. The protein is Urease accessory protein UreF of Haemophilus influenzae (strain PittEE).